We begin with the raw amino-acid sequence, 1035 residues long: MGGCEVREFLLQFGFFLPLLTAWTGDCSHVSNQVVLLDTSTVMGELGWKTYPLNGWDAITEMDEHNRPIHTYQVCNVMEPNQNNWLRTNWISRDAAQKIYVEMKFTLRDCNSIPWVLGTCKETFTLYYIESDESHGTKFKPSQYIKIDTIAADESFTQMDLGDRILKLNTEVREVGPIERKGFYLAFQDIGACIALVSVRVFYKKCPFTVRNLAMFPDTIPRVDSSSLVEVRGSCVKSSEERDTPKLYCGADGDWLVPLGRCICTTGYEEIEGSCHACRPGFYKAFAGNTKCSKCPPHSSTFVEATSVCHCEKGYFRAEKDPPSMACTRPPSAPRNVAFNINETALILEWSPPSDTGGRKDLTYSVICKKCGVDASQCEDCGAGLRFIPRPTGLINNSVVVLDFVSHVNYTFEIEAMNGVSELSISPKPFTAITVTTDQDAPSLIGMMRKDWASQNSLALSWQAPAFSNGAILDYEIKYYEKEHEQLTYSSTRSKAPSVIITGLKPATTYIFHIRVRTATGYSGYSQKFEFETGDETSDMAAEQGQILVIATAAVGGFTLLVILTLFFLITGRCQWYIKAKMKSEEKRRTHLQNSHLRFPGIKTYIDPDTYEDPSLAVHEFEKEIDPSRIRIERVIGAGEFGEVCSGRLKTPGKREIPVAIKTLKGGHMDRQRRDFLREASIMGQFDHPNIIRLEGVVTKRSFPAIGVEAFCPSFLRAGFLNGIQAPHPVTAGGSLPPRIPAGRPVMIVVEYMENGSLDSFLRKHDGHFTVIQLVGMLRGIASGMKYLSDMGYVHRDLAARNILVNSNLVCKVSDFGLSRVLEDDPEAAYTTTGGKIPIRWTAPEAIAYRKFSSASDVWSYGIVMWEVMSYGERPYWEMSNQDVILSIEEGYRLPAPMGCPPSLHQLMLHCWQKERNHRPKFTDIVSFLDKLIRNPSALHTLVEDILVMPESPGDVPEYPLFVTVGDWLDSIKMGQYKSNFMAAGFTTFDLISRMSIEDIRRIGVILIGHQRRIVSSIQTLRLHMMHIQEKGFHV.

An N-terminal signal peptide occupies residues 1–22 (MGGCEVREFLLQFGFFLPLLTA). At 23 to 549 (WTGDCSHVSN…MAAEQGQILV (527 aa)) the chain is on the extracellular side. One can recognise an Eph LBD domain in the interval 33–211 (QVVLLDTSTV…FYKKCPFTVR (179 aa)). 2 consecutive Fibronectin type-III domains span residues 330-440 (PPSA…TDQD) and 441-536 (APSL…TGDE). Residues Asn342, Asn396, and Asn409 are each glycosylated (N-linked (GlcNAc...) asparagine). The chain crosses the membrane as a helical span at residues 550 to 570 (IATAAVGGFTLLVILTLFFLI). At 571–1035 (TGRCQWYIKA…MHIQEKGFHV (465 aa)) the chain is on the cytoplasmic side. A phosphotyrosine; by autocatalysis mark is found at Tyr605 and Tyr611. The Protein kinase domain maps to 630–943 (IRIERVIGAG…RNPSALHTLV (314 aa)). ATP is bound by residues 636–644 (IGAGEFGEV) and Lys662. Residue Asp797 is the Proton acceptor of the active site. Phosphotyrosine; by autocatalysis occurs at positions 830 and 977. The region spanning 960 to 1024 (PLFVTVGDWL…VSSIQTLRLH (65 aa)) is the SAM domain. The short motif at 1033-1035 (FHV) is the PDZ-binding element.

This sequence belongs to the protein kinase superfamily. Tyr protein kinase family. Ephrin receptor subfamily. Heterotetramer upon binding of the ligand. The heterotetramer is composed of an ephrin dimer and a receptor dimer. Oligomerization is probably required to induce biological responses. Interacts (via SAM domain) with ANKS1A (via SAM domain). Brain.

It localises to the membrane. The enzyme catalyses L-tyrosyl-[protein] + ATP = O-phospho-L-tyrosyl-[protein] + ADP + H(+). Functionally, receptor tyrosine kinase which binds promiscuously GPI-anchored ephrin-A family ligands residing on adjacent cells, leading to contact-dependent bidirectional signaling into neighboring cells. The signaling pathway downstream of the receptor is referred to as forward signaling while the signaling pathway downstream of the ephrin ligand is referred to as reverse signaling. The sequence is that of Ephrin type-A receptor 6 (Epha6) from Rattus norvegicus (Rat).